A 393-amino-acid polypeptide reads, in one-letter code: Putative mitochondrial cysteine synthase (393 aa).

A helical transmembrane segment spans residues 12 to 31 (LAWRECISIASVLIGAYASY). At Lys86 the chain carries N6-(pyridoxal phosphate)lysine. Pyridoxal 5'-phosphate is bound by residues 230–234 (GTGGT) and Ser338.

This sequence belongs to the cysteine synthase/cystathionine beta-synthase family. Requires pyridoxal 5'-phosphate as cofactor.

It localises to the mitochondrion. The protein resides in the mitochondrion outer membrane. The enzyme catalyses O-acetyl-L-serine + hydrogen sulfide = L-cysteine + acetate. Functionally, putative cysteine synthase that catalyzes the conversion of O-acetyl-L-serine (OAS) into cysteine, the last step in the cysteine biosynthesis pathway. However, this CS-like protein is unlikely to function in cysteine biosynthesis. It seems that in S.cerevisiae cysteine biosynthesis occurs exclusively through the cystathionine pathway and not via direct incorporation of sulfur into OAS. In Saccharomyces cerevisiae (strain ATCC 204508 / S288c) (Baker's yeast), this protein is Putative mitochondrial cysteine synthase.